A 603-amino-acid chain; its full sequence is Chaperone protein DnaK (603 aa).

At Thr175 the chain carries Phosphothreonine; by autocatalysis. The segment covering 573-586 (AQQAQQQNPDNQNN) has biased composition (low complexity). The interval 573–603 (AQQAQQQNPDNQNNNKDDVTEATVTDDSTKK) is disordered. Residues 594 to 603 (ATVTDDSTKK) show a composition bias toward polar residues.

Belongs to the heat shock protein 70 family.

Its function is as follows. Acts as a chaperone. This is Chaperone protein DnaK from Ureaplasma parvum serovar 3 (strain ATCC 27815 / 27 / NCTC 11736).